Consider the following 248-residue polypeptide: Triosephosphate isomerase (248 aa).

Position 4 is a phosphothreonine (Thr4). The substrate site is built by Asn10 and Lys12. Ser71 is subject to Phosphoserine. His95 serves as the catalytic Electrophile. Catalysis depends on Glu165, which acts as the Proton acceptor. Phosphoserine is present on Ser215. Lys223 participates in a covalent cross-link: Glycyl lysine isopeptide (Lys-Gly) (interchain with G-Cter in ubiquitin).

It belongs to the triosephosphate isomerase family. As to quaternary structure, homodimer.

The enzyme catalyses D-glyceraldehyde 3-phosphate = dihydroxyacetone phosphate. It participates in carbohydrate biosynthesis; gluconeogenesis. Its pathway is carbohydrate degradation; glycolysis; D-glyceraldehyde 3-phosphate from glycerone phosphate: step 1/1. This chain is Triosephosphate isomerase (TPI1), found in Saccharomyces cerevisiae (strain ATCC 204508 / S288c) (Baker's yeast).